Consider the following 245-residue polypeptide: MKSAIFAAAVLGAAGVSAHGYVSKAILDGKEYTGYLPYEDPYHNPPPERIFRKIAGNGPIEDLTSIDLQCGGWQNSGSAPAPLTAEPVTPGTVQKLQWTTWPDSHKGPIITYMARCPGDCSEYEPGTDAVWFKIAEDGKHDDGSWASDPLINDVPYEFTIPEGLAPGNYIVRHELWALHAAWTYPGAQVYPSCFQVKVVGDGTQQPTNLVAFPGEYTPDTPGVVYDIYQNNEPYPIPGPPVWTPA.

A signal peptide spans 1–18 (MKSAIFAAAVLGAAGVSA). Cu(2+) is bound by residues histidine 19 and histidine 105. Cysteine 116 and cysteine 120 are joined by a disulfide. 2 residues coordinate O2: histidine 179 and glutamine 188. Residue tyrosine 190 coordinates Cu(2+).

It belongs to the polysaccharide monooxygenase AA9 family. The cofactor is Cu(2+).

It localises to the secreted. It catalyses the reaction [(1-&gt;4)-beta-D-glucosyl]n+m + reduced acceptor + O2 = 4-dehydro-beta-D-glucosyl-[(1-&gt;4)-beta-D-glucosyl]n-1 + [(1-&gt;4)-beta-D-glucosyl]m + acceptor + H2O.. Functionally, lytic polysaccharide monooxygenase (LPMO) that depolymerizes crystalline and amorphous polysaccharides via the oxidation of scissile alpha- or beta-(1-4)-glycosidic bonds, yielding C1 or C4 oxidation products. Catalysis by LPMOs requires the reduction of the active-site copper from Cu(II) to Cu(I) by a reducing agent and H(2)O(2) or O(2) as a cosubstrate. Active on hemicelluloses, including xylan, glucomannan, and xyloglucan. Has no activity on ivory nut mannan (INM), a linear beta-1,4-linked mannan without substitutions. The chain is AA9 family lytic polysaccharide monooxygenase B from Malbranchea cinnamomea (Thermophilic fungus).